The primary structure comprises 378 residues: Spermidine/putrescine import ATP-binding protein PotA (378 aa).

The 231-residue stretch at valine 18–isoleucine 248 folds into the ABC transporter domain. Residue glycine 50–threonine 57 participates in ATP binding.

It belongs to the ABC transporter superfamily. Spermidine/putrescine importer (TC 3.A.1.11.1) family. The complex is composed of two ATP-binding proteins (PotA), two transmembrane proteins (PotB and PotC) and a solute-binding protein (PotD).

The protein localises to the cell inner membrane. The catalysed reaction is ATP + H2O + polyamine-[polyamine-binding protein]Side 1 = ADP + phosphate + polyamineSide 2 + [polyamine-binding protein]Side 1.. Its function is as follows. Part of the ABC transporter complex PotABCD involved in spermidine/putrescine import. Responsible for energy coupling to the transport system. In Escherichia coli O1:K1 / APEC, this protein is Spermidine/putrescine import ATP-binding protein PotA.